A 583-amino-acid chain; its full sequence is Alpha-1,3-arabinosyltransferase XAT2 (583 aa).

Residues 1 to 21 (MKPVERAKLVRSLRQESRRLR) lie on the Cytoplasmic side of the membrane. Residues 22-42 (LLVLVIGFFLVTLTFVVISKP) form a helical; Signal-anchor for type II membrane protein membrane-spanning segment. Residues 43 to 583 (DALLFNLNGR…LLEVLDQLNQ (541 aa)) lie on the Lumenal side of the membrane. Residues 73–178 (RRSADTFPAA…NGKQEDGKPN (106 aa)) form a disordered region. 2 stretches are compositionally biased toward basic and acidic residues: residues 102 to 121 (TSEE…KNEE) and 135 to 146 (EDNKNGEEEGHT). Residues 149–160 (SKVTLPTVSNYT) are compositionally biased toward polar residues. Residue Asn-158 is glycosylated (N-linked (GlcNAc...) asparagine). The segment covering 162–178 (RDAEDTDNGKQEDGKPN) has biased composition (basic and acidic residues). N-linked (GlcNAc...) asparagine glycosylation is found at Asn-229, Asn-382, Asn-450, and Asn-485.

The protein belongs to the glycosyltransferase 61 family.

It localises to the golgi apparatus membrane. The protein operates within glycan metabolism. Its function is as follows. Glycosyltransferase involved in the arabinosylation of xylan, the major hemicellulose (non-cellulosic component) of primary and secondary walls of angiosperms. Possesses alpha-1,3-arabinosyltransferase activity, transferring an arabinofuranose residue to the xylan backbone. The chain is Alpha-1,3-arabinosyltransferase XAT2 from Oryza sativa subsp. japonica (Rice).